We begin with the raw amino-acid sequence, 144 residues long: MKVLVVNGPNLNMLGKRDKNIYGNFSHEDLVKMIEDWGRKNDVEVEVFQSNHEGEILDRLHRLDFDGLVINPGAFTHYSYAIRDALEIVKVPKVEVHISNIHRREEFRRRSVTAEVCDGQISGLGVYGYLLALEYIKKKLEELT.

Tyr-22 functions as the Proton acceptor in the catalytic mechanism. Substrate is bound by residues Asn-71, His-77, and Asp-84. His-97 serves as the catalytic Proton donor. Substrate-binding positions include 98 to 99 (IS) and Arg-108.

The protein belongs to the type-II 3-dehydroquinase family. Homododecamer.

It carries out the reaction 3-dehydroquinate = 3-dehydroshikimate + H2O. It functions in the pathway metabolic intermediate biosynthesis; chorismate biosynthesis; chorismate from D-erythrose 4-phosphate and phosphoenolpyruvate: step 3/7. Its function is as follows. Catalyzes a trans-dehydration via an enolate intermediate. The sequence is that of 3-dehydroquinate dehydratase from Thermotoga petrophila (strain ATCC BAA-488 / DSM 13995 / JCM 10881 / RKU-1).